Consider the following 640-residue polypeptide: PTS system mannitol-specific EIICBA component (640 aa).

Positions 12–343 (LGRFLSAMIM…LKISNRNHYV (332 aa)) constitute a PTS EIIC type-2 domain. Transmembrane regions (helical) follow at residues 24–45 (ISVF…WCPN), 50–70 (KVLS…TGGY), 134–155 (SVGI…PMIE), 165–185 (VNLM…EPAK), 273–292 (LILG…GGLI), and 313–334 (VINL…CMLL). A PTS EIIB type-2 domain is found at 379 to 475 (RNIIFACDAG…YLVENNLDNN (97 aa)). The Phosphocysteine intermediate; for EIIB activity role is filled by Cys-385. The residue at position 385 (Cys-385) is a Phosphocysteine; by EIIA. A PTS EIIA type-2 domain is found at 496 to 638 (FSLTKENIFL…DDVLYLFSRK (143 aa)). Residue His-556 is the Tele-phosphohistidine intermediate; for EIIA activity of the active site. Phosphohistidine; by HPr is present on His-556.

In terms of assembly, homodimer. Post-translationally, an intramolecular phosphotransfer takes places between His-556 and Cys-385.

The protein localises to the cell inner membrane. The enzyme catalyses D-mannitol(out) + N(pros)-phospho-L-histidyl-[protein] = D-mannitol 1-phosphate(in) + L-histidyl-[protein]. In terms of biological role, the phosphoenolpyruvate-dependent sugar phosphotransferase system (sugar PTS), a major carbohydrate active transport system, catalyzes the phosphorylation of incoming sugar substrates concomitantly with their translocation across the cell membrane. This system is involved in D-mannitol transport. In Buchnera aphidicola subsp. Baizongia pistaciae (strain Bp), this protein is PTS system mannitol-specific EIICBA component (mtlA).